Here is a 235-residue protein sequence, read N- to C-terminus: Deoxyribose-phosphate aldolase (235 aa).

Aspartate 107 functions as the Proton donor/acceptor in the catalytic mechanism. Lysine 167 serves as the catalytic Schiff-base intermediate with acetaldehyde. Residue lysine 197 is the Proton donor/acceptor of the active site.

This sequence belongs to the DeoC/FbaB aldolase family. DeoC type 1 subfamily. In terms of assembly, homotetramer.

It is found in the cytoplasm. The catalysed reaction is 2-deoxy-D-ribose 5-phosphate = D-glyceraldehyde 3-phosphate + acetaldehyde. It functions in the pathway carbohydrate degradation; 2-deoxy-D-ribose 1-phosphate degradation; D-glyceraldehyde 3-phosphate and acetaldehyde from 2-deoxy-alpha-D-ribose 1-phosphate: step 2/2. Catalyzes a reversible aldol reaction between acetaldehyde and D-glyceraldehyde 3-phosphate to generate 2-deoxy-D-ribose 5-phosphate. This Aeropyrum pernix (strain ATCC 700893 / DSM 11879 / JCM 9820 / NBRC 100138 / K1) protein is Deoxyribose-phosphate aldolase.